We begin with the raw amino-acid sequence, 213 residues long: uncharacterized protein (213 aa).

Residues Ser-114, Asp-162, and His-194 each act as charge relay system in the active site.

The protein belongs to the AB hydrolase superfamily. AB hydrolase 2 family.

This is an uncharacterized protein from Rickettsia bellii (strain RML369-C).